The following is a 212-amino-acid chain: 3-isopropylmalate dehydratase small subunit 1 (212 aa).

It belongs to the LeuD family. LeuD type 1 subfamily. As to quaternary structure, heterodimer of LeuC and LeuD.

It catalyses the reaction (2R,3S)-3-isopropylmalate = (2S)-2-isopropylmalate. It functions in the pathway amino-acid biosynthesis; L-leucine biosynthesis; L-leucine from 3-methyl-2-oxobutanoate: step 2/4. Its function is as follows. Catalyzes the isomerization between 2-isopropylmalate and 3-isopropylmalate, via the formation of 2-isopropylmaleate. This is 3-isopropylmalate dehydratase small subunit 1 from Chromobacterium violaceum (strain ATCC 12472 / DSM 30191 / JCM 1249 / CCUG 213 / NBRC 12614 / NCIMB 9131 / NCTC 9757 / MK).